The chain runs to 366 residues: Chorismate synthase (366 aa).

Positions 48 and 54 each coordinate NADP(+). Residues 125–127 (RSS), 242–243 (NA), G287, 302–306 (KPTSS), and R328 each bind FMN.

Belongs to the chorismate synthase family. Homotetramer. The cofactor is FMNH2.

The catalysed reaction is 5-O-(1-carboxyvinyl)-3-phosphoshikimate = chorismate + phosphate. It participates in metabolic intermediate biosynthesis; chorismate biosynthesis; chorismate from D-erythrose 4-phosphate and phosphoenolpyruvate: step 7/7. Catalyzes the anti-1,4-elimination of the C-3 phosphate and the C-6 proR hydrogen from 5-enolpyruvylshikimate-3-phosphate (EPSP) to yield chorismate, which is the branch point compound that serves as the starting substrate for the three terminal pathways of aromatic amino acid biosynthesis. This reaction introduces a second double bond into the aromatic ring system. In Rhodospirillum rubrum (strain ATCC 11170 / ATH 1.1.1 / DSM 467 / LMG 4362 / NCIMB 8255 / S1), this protein is Chorismate synthase.